Consider the following 148-residue polypeptide: MKEKIPFYNEKEFNEMMKKTKKGTFSGWYIINPENNSVEFSGSFNRQFKLNKPIIPVNTEYVTRKEFNEYKDSNDQRLIKIETTLTAQGEQINKLTQTVEKQGEQIRELQVEQKAQGEQIKAQGETLKLILQTLQKMSDRLDKIDPPK.

This sequence belongs to the UPF0134 family.

The sequence is that of UPF0134 protein MPN_410 from Mycoplasma pneumoniae (strain ATCC 29342 / M129 / Subtype 1) (Mycoplasmoides pneumoniae).